The primary structure comprises 642 residues: Threonine--tRNA ligase (642 aa).

Positions 1-61 (MPVITLPDGS…ENDAQLSIIT (61 aa)) constitute a TGS domain. The interval 243–534 (DHRKIGKQLD…LTEEFAGFFP (292 aa)) is catalytic. Lysine 286 is subject to N6-acetyllysine. Residues cysteine 334, histidine 385, and histidine 511 each contribute to the Zn(2+) site.

This sequence belongs to the class-II aminoacyl-tRNA synthetase family. Homodimer. Zn(2+) is required as a cofactor.

It localises to the cytoplasm. It carries out the reaction tRNA(Thr) + L-threonine + ATP = L-threonyl-tRNA(Thr) + AMP + diphosphate + H(+). Its function is as follows. Catalyzes the attachment of threonine to tRNA(Thr) in a two-step reaction: L-threonine is first activated by ATP to form Thr-AMP and then transferred to the acceptor end of tRNA(Thr). Also edits incorrectly charged L-seryl-tRNA(Thr). This chain is Threonine--tRNA ligase, found in Escherichia coli O157:H7.